The chain runs to 464 residues: Protein FAM90A9 (464 aa).

Disordered regions lie at residues 1-42 (MMAR…DPRL), 70-389 (PATL…HDGA), and 411-437 (APSFHSPEKPGTFLAQSPHVSEKSEAP). 2 stretches are compositionally biased toward basic and acidic residues: residues 74-89 (GKKEGKENLKPWKPRV) and 97-114 (NKDKGEKEERPRQQDPQR). Residues 180–197 (LASLSPLRKASLSSSSSL) are compositionally biased toward low complexity.

The protein belongs to the FAM90 family.

This is Protein FAM90A9 (FAM90A9) from Homo sapiens (Human).